The primary structure comprises 231 residues: 5'-methylthioadenosine/S-adenosylhomocysteine nucleosidase (231 aa).

E12 serves as the catalytic Proton acceptor. Substrate-binding positions include G78, V153, and 174 to 175 (ME). D198 (proton donor) is an active-site residue.

This sequence belongs to the PNP/UDP phosphorylase family. MtnN subfamily.

The catalysed reaction is S-adenosyl-L-homocysteine + H2O = S-(5-deoxy-D-ribos-5-yl)-L-homocysteine + adenine. The enzyme catalyses S-methyl-5'-thioadenosine + H2O = 5-(methylsulfanyl)-D-ribose + adenine. It carries out the reaction 5'-deoxyadenosine + H2O = 5-deoxy-D-ribose + adenine. The protein operates within amino-acid biosynthesis; L-methionine biosynthesis via salvage pathway; S-methyl-5-thio-alpha-D-ribose 1-phosphate from S-methyl-5'-thioadenosine (hydrolase route): step 1/2. In terms of biological role, catalyzes the irreversible cleavage of the glycosidic bond in both 5'-methylthioadenosine (MTA) and S-adenosylhomocysteine (SAH/AdoHcy) to adenine and the corresponding thioribose, 5'-methylthioribose and S-ribosylhomocysteine, respectively. Also cleaves 5'-deoxyadenosine, a toxic by-product of radical S-adenosylmethionine (SAM) enzymes, into 5-deoxyribose and adenine. The chain is 5'-methylthioadenosine/S-adenosylhomocysteine nucleosidase from Vibrio parahaemolyticus serotype O3:K6 (strain RIMD 2210633).